Consider the following 110-residue polypeptide: Insulin (110 aa).

The N-terminal stretch at 1-24 (MALWMRLLPLLALLALWGPDPVPA) is a signal peptide. 3 disulfide bridges follow: Cys-31–Cys-96, Cys-43–Cys-109, and Cys-95–Cys-100. The propeptide at 57–87 (EAEDPQVGQVELGGGPGAGSLQPLALEGSLQ) is c peptide.

This sequence belongs to the insulin family. Heterodimer of a B chain and an A chain linked by two disulfide bonds.

The protein localises to the secreted. Insulin decreases blood glucose concentration. It increases cell permeability to monosaccharides, amino acids and fatty acids. It accelerates glycolysis, the pentose phosphate cycle, and glycogen synthesis in liver. In Chlorocebus aethiops (Green monkey), this protein is Insulin (INS).